The following is a 694-amino-acid chain: Ubiquitin-like modifier-activating enzyme ATG7 (694 aa).

The GXGXXG motif signature appears at 370 to 375; that stretch reads GAGTLG. Catalysis depends on Cys-550, which acts as the Glycyl thioester intermediate. The homodimerization stretch occupies residues 650-689; that stretch reads ALQEKEYVAELSGLAEVQRRAEEMAAHVDWEEDDDLVDDG.

The protein belongs to the ATG7 family. Homodimer. Interacts with ATG8 through a thioester bond between Cys-550 and the C-terminal 'Gly-116' of ATG8 and with ATG12 through a thioester bond between Cys-550 and the C-terminal 'Gly-160' of ATG12. Also interacts with ATG3.

It is found in the cytoplasm. Its subcellular location is the preautophagosomal structure. E1-like activating enzyme involved in the 2 ubiquitin-like systems required for cytoplasm to vacuole transport (Cvt) and autophagy. Activates ATG12 for its conjugation with ATG5 and ATG8 for its conjugation with phosphatidylethanolamine. Both systems are needed for the ATG8 association to Cvt vesicles and autophagosomes membranes. Autophagy is essential for maintenance of amino acid levels and protein synthesis under nitrogen starvation. Required for selective autophagic degradation of the nucleus (nucleophagy) as well as for mitophagy which contributes to regulate mitochondrial quantity and quality by eliminating the mitochondria to a basal level to fulfill cellular energy requirements and preventing excess ROS production. Autophagy is required for proper vegetative growth, asexual/sexual reproduction, and full virulence. Autophagy is particularly involved in the biosynthesis of deoxynivalenol (DON), an important virulence determinant. The chain is Ubiquitin-like modifier-activating enzyme ATG7 from Gibberella zeae (strain ATCC MYA-4620 / CBS 123657 / FGSC 9075 / NRRL 31084 / PH-1) (Wheat head blight fungus).